The chain runs to 917 residues: Protein translocase subunit SecA (917 aa).

Residues Gln87, Gly105–Thr109, and Asp501 each bind ATP. The Zn(2+) site is built by Cys901, Cys903, Cys912, and His913.

It belongs to the SecA family. As to quaternary structure, monomer and homodimer. Part of the essential Sec protein translocation apparatus which comprises SecA, SecYEG and auxiliary proteins SecDF-YajC and YidC. Requires Zn(2+) as cofactor.

The protein localises to the cell inner membrane. It localises to the cytoplasm. It carries out the reaction ATP + H2O + cellular proteinSide 1 = ADP + phosphate + cellular proteinSide 2.. Its function is as follows. Part of the Sec protein translocase complex. Interacts with the SecYEG preprotein conducting channel. Has a central role in coupling the hydrolysis of ATP to the transfer of proteins into and across the cell membrane, serving both as a receptor for the preprotein-SecB complex and as an ATP-driven molecular motor driving the stepwise translocation of polypeptide chains across the membrane. The protein is Protein translocase subunit SecA of Granulibacter bethesdensis (strain ATCC BAA-1260 / CGDNIH1).